A 679-amino-acid chain; its full sequence is Methionine--tRNA ligase (679 aa).

The 'HIGH' region motif lies at 14 to 24; sequence PYANGSIHLGH. Residues Cys-145, Cys-148, Cys-158, and Cys-161 each contribute to the Zn(2+) site. The 'KMSKS' region signature appears at 331–335; it reads KMSKS. Lys-334 contacts ATP. A tRNA-binding domain is found at 577 to 679; it reads TFAAVDLRVA…SGAKPGQRIK (103 aa).

The protein belongs to the class-I aminoacyl-tRNA synthetase family. MetG type 1 subfamily. In terms of assembly, homodimer. It depends on Zn(2+) as a cofactor.

It is found in the cytoplasm. It carries out the reaction tRNA(Met) + L-methionine + ATP = L-methionyl-tRNA(Met) + AMP + diphosphate. Is required not only for elongation of protein synthesis but also for the initiation of all mRNA translation through initiator tRNA(fMet) aminoacylation. The chain is Methionine--tRNA ligase from Pseudomonas putida (strain ATCC 47054 / DSM 6125 / CFBP 8728 / NCIMB 11950 / KT2440).